The sequence spans 742 residues: MPCCSHRSCREDPGTSESREMDPVAFEDVAVNFTQEEWTLLDISQKNLFREVMLETFRNLTSIGKKWSDQNIEYEYQNPRRSFRSLIEEKVNEIKEDSHCGETFTQVPDDRLNFQEKKASPEVKSCDSFVCAEVGIGNSSFNMSIRGDTGHKAYEYQEYGPKPYKCQQPKNKKAFRYRPSIRTQERDHTGEKPYACKVCGKTFIFHSSIRRHMVMHSGDGTYKCKFCGKAFHSFSLYLIHERTHTGEKPYECKQCGKSFTYSATLQIHERTHTGEKPYECSKCDKAFHSSSSYHRHERSHMGEKPYQCKECGKAFAYTSSLRRHERTHSGKKPYECKQYGEGLSYLISFQTHIRMNSGERPYKCKICGKGFYSAKSFQTHEKTHTGEKRYKCKQCGKAFNLSSSFRYHERIHTGEKPYECKQCGKAFRSASQLRVHGGTHTGEKPYECKECGKAFRSTSHLRVHGRTHTGEKPYECKECGKAFRYVKHLQIHERTEKHIRMPSGERPYKCSICEKGFYSAKSFQTHEKTHTGEKPYECNQCGKAFRCCNSLRYHERTHTGEKPYECKQCGKAFRSASHLRMHERTHTGEKPYECKQCGKAFSCASNLRKHGRTHTGEKPYECKQCGKAFRSASNLQMHERTHTGEKPYECKECEKAFCKFSSFQIHERKHRGEKPYECKHCGNGFTSAKILQIHARTHIGEKHYECKECGKAFNYFSSLHIHARTHMGEKPYECKDCGKAFS.

A disordered region spans residues Met1 to Glu20. Residues Ser8 to Glu20 show a composition bias toward basic and acidic residues. Residues Val24–Phe104 form the KRAB domain. 9 consecutive C2H2-type zinc fingers follow at residues Tyr194–His216, Tyr222–His244, Tyr250–His272, Tyr278–His300, Tyr306–His328, Tyr362–His384, Tyr390–His412, Tyr418–His440, and Tyr446–His468. A C2H2-type 10; degenerate zinc finger spans residues Tyr474 to Pro502. 8 C2H2-type zinc fingers span residues Tyr508–His530, Tyr536–His558, Tyr564–His586, Tyr592–His614, Tyr620–His642, Tyr648–His670, Tyr676–His698, and Tyr704–His726.

It belongs to the krueppel C2H2-type zinc-finger protein family.

It localises to the nucleus. In terms of biological role, may be involved in transcriptional regulation. This Homo sapiens (Human) protein is Zinc finger protein 700 (ZNF700).